Reading from the N-terminus, the 422-residue chain is Acylglycerol kinase, mitochondrial (422 aa).

K6 is modified (N6-acetyllysine). The interval 15–31 (TTAGLCLLTWGGHWLYG) is hydrophobic. Positions 58 to 199 (AQVKKATVFL…LDVLQIKGEK (142 aa)) constitute a DAGKc domain. The tract at residues 249–271 (QASISYTGPTERPPNEPEETPVQ) is disordered.

The protein belongs to the AGK family. As to quaternary structure, component of the TIM22 complex, which core is composed of TIMM22, associated with TIMM10 (TIMM10A and/or TIMM10B), TIMM9, AGK and TIMM29. Interacts with SMIM26. It depends on Mg(2+) as a cofactor. Highly expressed in muscle, heart, kidney and brain.

The protein resides in the mitochondrion inner membrane. Its subcellular location is the mitochondrion intermembrane space. It carries out the reaction a monoacylglycerol + ATP = a monoacyl-sn-glycero-3-phosphate + ADP + H(+). It catalyses the reaction a 1,2-diacyl-sn-glycerol + ATP = a 1,2-diacyl-sn-glycero-3-phosphate + ADP + H(+). The enzyme catalyses an N-acylsphing-4-enine + ATP = an N-acylsphing-4-enine 1-phosphate + ADP + H(+). The catalysed reaction is 1-(9Z-octadecenoyl)-sn-glycerol + ATP = 1-(9Z-octadecenoyl)-sn-glycero-3-phosphate + ADP + H(+). It carries out the reaction 1,2-di-(9Z-octadecenoyl)-sn-glycerol + ATP = 1,2-di-(9Z-octadecenoyl)-sn-glycero-3-phosphate + ADP + H(+). It catalyses the reaction a 1-acyl-sn-glycerol + ATP = a 1-acyl-sn-glycero-3-phosphate + ADP + H(+). The enzyme catalyses 1-hexadecanoyl-sn-glycerol + ATP = 1-hexadecanoyl-sn-glycero-3-phosphate + ADP + H(+). The catalysed reaction is a 2-acylglycerol + ATP = a 2-acyl-sn-glycerol 3-phosphate + ADP + H(+). It carries out the reaction 2-(5Z,8Z,11Z,14Z-eicosatetraenoyl)-glycerol + ATP = 2-(5Z,8Z,11Z,14Z-eicosatetraenoyl)-sn-glycero-3-phosphate + ADP + H(+). It catalyses the reaction 1-(5Z,8Z,11Z,14Z-eicosatetraenoyl)-sn-glycerol + ATP = 1-(5Z,8Z,11Z,14Z-eicosatetraenoyl)-sn-glycero-3-phosphate + ADP + H(+). The enzyme catalyses N-(hexanoyl)sphing-4-enine + ATP = N-hexanoylsphing-4-enine 1-phosphate + ADP + H(+). Its pathway is lipid metabolism; glycerolipid metabolism. Functionally, lipid kinase that can phosphorylate both monoacylglycerol and diacylglycerol to form lysophosphatidic acid (LPA) and phosphatidic acid (PA), respectively. Does not phosphorylate sphingosine. Phosphorylates ceramide. Phosphorylates 1,2-dioleoylglycerol more rapidly than 2,3-dioleoylglycerol. Independently of its lipid kinase activity, acts as a component of the TIM22 complex. The TIM22 complex mediates the import and insertion of multi-pass transmembrane proteins into the mitochondrial inner membrane by forming a twin-pore translocase that uses the membrane potential as the external driving force. In the TIM22 complex, required for the import of a subset of metabolite carriers into mitochondria, such as ANT1/SLC25A4 and SLC25A24, while it is not required for the import of TIMM23. Overexpression increases the formation and secretion of LPA, resulting in transactivation of EGFR and activation of the downstream MAPK signaling pathway, leading to increased cell growth. This is Acylglycerol kinase, mitochondrial from Homo sapiens (Human).